Consider the following 249-residue polypeptide: Adenosylcobinamide-GDP ribazoletransferase (249 aa).

A run of 7 helical transmembrane segments spans residues 29-49 (LYWFPVVGAFLGTLLAACAWL), 50-70 (PLSIGWSELASAVVVVGGFIV), 104-124 (VGSFGALALLSLMLLKWVAIL), 131-151 (AFALIASGVLLGRLSQVLLAA), 165-185 (GFVGGAGRTHAAVALALSLMM), 194-214 (PFLLFLLFGAALTAAALIGFL), and 226-246 (VLGAVSEVTELFVWLAAGVAF).

The protein belongs to the CobS family. It depends on Mg(2+) as a cofactor.

It localises to the cell inner membrane. It carries out the reaction alpha-ribazole + adenosylcob(III)inamide-GDP = adenosylcob(III)alamin + GMP + H(+). It catalyses the reaction alpha-ribazole 5'-phosphate + adenosylcob(III)inamide-GDP = adenosylcob(III)alamin 5'-phosphate + GMP + H(+). The protein operates within cofactor biosynthesis; adenosylcobalamin biosynthesis; adenosylcobalamin from cob(II)yrinate a,c-diamide: step 7/7. Functionally, joins adenosylcobinamide-GDP and alpha-ribazole to generate adenosylcobalamin (Ado-cobalamin). Also synthesizes adenosylcobalamin 5'-phosphate from adenosylcobinamide-GDP and alpha-ribazole 5'-phosphate. The polypeptide is Adenosylcobinamide-GDP ribazoletransferase (Chlorobium phaeovibrioides (strain DSM 265 / 1930) (Prosthecochloris vibrioformis (strain DSM 265))).